Reading from the N-terminus, the 375-residue chain is Alcohol dehydrogenase 1A (375 aa).

At G1 the chain carries N-acetylglycine. Zn(2+)-binding residues include C46, H67, C97, C100, C103, C111, and C174. NAD(+)-binding positions include 199-204 (GLGGVG), D223, K228, 293-295 (VGL), and R370.

It belongs to the zinc-containing alcohol dehydrogenase family. Class-I subfamily. In terms of assembly, multimeric (with different ratios of monomers). Requires Zn(2+) as cofactor.

The protein resides in the cytoplasm. The enzyme catalyses a primary alcohol + NAD(+) = an aldehyde + NADH + H(+). It carries out the reaction a secondary alcohol + NAD(+) = a ketone + NADH + H(+). The sequence is that of Alcohol dehydrogenase 1A from Saara hardwickii (Indian spiny-tailed lizard).